The sequence spans 358 residues: uncharacterized protein (358 aa).

One can recognise an EF-hand domain in the interval 229–264; it reads KQLHEFKLAFDYFDQEKNGWLDYEHFELCLKSQGYN. Ca(2+) is bound by residues aspartate 242, asparagine 246, tryptophan 248, and histidine 253.

This is an uncharacterized protein from Caenorhabditis elegans.